The primary structure comprises 410 residues: Imidazolonepropionase (410 aa).

Residues His-73 and His-75 each contribute to the Fe(3+) site. Zn(2+) is bound by residues His-73 and His-75. 3 residues coordinate 4-imidazolone-5-propanoate: Arg-82, Tyr-145, and His-178. Tyr-145 is a binding site for N-formimidoyl-L-glutamate. A Fe(3+)-binding site is contributed by His-243. Residue His-243 participates in Zn(2+) binding. Residue Gln-246 participates in 4-imidazolone-5-propanoate binding. Asp-318 contacts Fe(3+). Asp-318 is a Zn(2+) binding site. N-formimidoyl-L-glutamate-binding residues include Asn-320 and Gly-322. A 4-imidazolone-5-propanoate-binding site is contributed by Ser-323.

The protein belongs to the metallo-dependent hydrolases superfamily. HutI family. It depends on Zn(2+) as a cofactor. Requires Fe(3+) as cofactor.

The protein localises to the cytoplasm. It catalyses the reaction 4-imidazolone-5-propanoate + H2O = N-formimidoyl-L-glutamate. It functions in the pathway amino-acid degradation; L-histidine degradation into L-glutamate; N-formimidoyl-L-glutamate from L-histidine: step 3/3. Functionally, catalyzes the hydrolytic cleavage of the carbon-nitrogen bond in imidazolone-5-propanoate to yield N-formimidoyl-L-glutamate. It is the third step in the universal histidine degradation pathway. The polypeptide is Imidazolonepropionase (Shewanella frigidimarina (strain NCIMB 400)).